The sequence spans 699 residues: Elongation factor G (699 aa).

In terms of domain architecture, tr-type G spans 8 to 286 (EKLRNIGIVA…AVIVTYPLPI (279 aa)). Residues 17-24 (AHIDAGKT), 84-88 (DTPGH), and 138-141 (NKMD) each bind GTP.

The protein belongs to the TRAFAC class translation factor GTPase superfamily. Classic translation factor GTPase family. EF-G/EF-2 subfamily.

The protein resides in the cytoplasm. Its function is as follows. Catalyzes the GTP-dependent ribosomal translocation step during translation elongation. During this step, the ribosome changes from the pre-translocational (PRE) to the post-translocational (POST) state as the newly formed A-site-bound peptidyl-tRNA and P-site-bound deacylated tRNA move to the P and E sites, respectively. Catalyzes the coordinated movement of the two tRNA molecules, the mRNA and conformational changes in the ribosome. In Aquifex pyrophilus, this protein is Elongation factor G (fusA).